The chain runs to 488 residues: Proline--tRNA ligase (488 aa).

Belongs to the class-II aminoacyl-tRNA synthetase family. ProS type 3 subfamily. As to quaternary structure, homodimer.

It localises to the cytoplasm. The catalysed reaction is tRNA(Pro) + L-proline + ATP = L-prolyl-tRNA(Pro) + AMP + diphosphate. Catalyzes the attachment of proline to tRNA(Pro) in a two-step reaction: proline is first activated by ATP to form Pro-AMP and then transferred to the acceptor end of tRNA(Pro). In Pyrobaculum aerophilum (strain ATCC 51768 / DSM 7523 / JCM 9630 / CIP 104966 / NBRC 100827 / IM2), this protein is Proline--tRNA ligase.